The sequence spans 210 residues: 23 kDa jasmonate-induced protein (210 aa).

Belongs to the jasmonate-induced protein family.

The sequence is that of 23 kDa jasmonate-induced protein from Hordeum vulgare (Barley).